Here is a 149-residue protein sequence, read N- to C-terminus: 4-hydroxyphenylacetate 3-monooxygenase, reductase component (149 aa).

27–34 (ERGMTATA) contacts FAD. An NAD(+)-binding site is contributed by serine 37. Residues 48–50 (AVS), 54–55 (KL), and histidine 80 each bind FAD. NAD(+) contacts are provided by residues histidine 116 and 137–140 (YFQR).

The protein belongs to the non-flavoprotein flavin reductase family. HpaC subfamily. Homodimer. 4-HPA 3-monooxygenase consists of a reductase component HpaC and an oxygenase component HpaB.

It catalyses the reaction a reduced flavin + NAD(+) = an oxidized flavin + NADH + 2 H(+). It functions in the pathway aromatic compound metabolism; 4-hydroxyphenylacetate degradation; pyruvate and succinate semialdehyde from 4-hydroxyphenylacetate: step 1/7. Its function is as follows. Catalyzes the reduction of free flavins (FMN, FAD and riboflavin) by NADH. Subsequently, the reduced flavins diffuse to the large HpaB component. It utilizes NADH, but not NADPH as an electron donor, and both FAD and FMN as electron acceptors. This Thermus thermophilus (strain ATCC 27634 / DSM 579 / HB8) protein is 4-hydroxyphenylacetate 3-monooxygenase, reductase component.